Reading from the N-terminus, the 158-residue chain is NAD(P)H-quinone oxidoreductase subunit J, chloroplastic (158 aa).

The protein belongs to the complex I 30 kDa subunit family. As to quaternary structure, NDH is composed of at least 16 different subunits, 5 of which are encoded in the nucleus.

It is found in the plastid. The protein resides in the chloroplast thylakoid membrane. It carries out the reaction a plastoquinone + NADH + (n+1) H(+)(in) = a plastoquinol + NAD(+) + n H(+)(out). The enzyme catalyses a plastoquinone + NADPH + (n+1) H(+)(in) = a plastoquinol + NADP(+) + n H(+)(out). Functionally, NDH shuttles electrons from NAD(P)H:plastoquinone, via FMN and iron-sulfur (Fe-S) centers, to quinones in the photosynthetic chain and possibly in a chloroplast respiratory chain. The immediate electron acceptor for the enzyme in this species is believed to be plastoquinone. Couples the redox reaction to proton translocation, and thus conserves the redox energy in a proton gradient. The polypeptide is NAD(P)H-quinone oxidoreductase subunit J, chloroplastic (Cucumis sativus (Cucumber)).